A 140-amino-acid polypeptide reads, in one-letter code: Putative cell wall protein (140 aa).

Residues Met-1 to Ser-21 form the signal peptide. The segment covering Thr-85–Ala-98 has biased composition (gly residues). Residues Thr-85–Pro-140 form a disordered region.

In terms of tissue distribution, inflorescence.

The protein localises to the secreted. The protein resides in the cell wall. The chain is Putative cell wall protein from Arabidopsis thaliana (Mouse-ear cress).